The following is a 104-amino-acid chain: MAAKIRRDDEVIVLTGKDKGKRGKVKNVLSSGKIIVEGINLVKKHQKPVPALNQPGGIVEKEAALQISNVALFNSATGKADRVGFRFEDGKKVRFFKSNSETIK.

This sequence belongs to the universal ribosomal protein uL24 family. As to quaternary structure, part of the 50S ribosomal subunit.

Functionally, one of two assembly initiator proteins, it binds directly to the 5'-end of the 23S rRNA, where it nucleates assembly of the 50S subunit. Its function is as follows. One of the proteins that surrounds the polypeptide exit tunnel on the outside of the subunit. The sequence is that of Large ribosomal subunit protein uL24 from Erwinia tasmaniensis (strain DSM 17950 / CFBP 7177 / CIP 109463 / NCPPB 4357 / Et1/99).